The following is a 155-amino-acid chain: SsrA-binding protein (155 aa).

The protein belongs to the SmpB family.

Its subcellular location is the cytoplasm. In terms of biological role, required for rescue of stalled ribosomes mediated by trans-translation. Binds to transfer-messenger RNA (tmRNA), required for stable association of tmRNA with ribosomes. tmRNA and SmpB together mimic tRNA shape, replacing the anticodon stem-loop with SmpB. tmRNA is encoded by the ssrA gene; the 2 termini fold to resemble tRNA(Ala) and it encodes a 'tag peptide', a short internal open reading frame. During trans-translation Ala-aminoacylated tmRNA acts like a tRNA, entering the A-site of stalled ribosomes, displacing the stalled mRNA. The ribosome then switches to translate the ORF on the tmRNA; the nascent peptide is terminated with the 'tag peptide' encoded by the tmRNA and targeted for degradation. The ribosome is freed to recommence translation, which seems to be the essential function of trans-translation. The protein is SsrA-binding protein of Bacillus cereus (strain G9842).